Reading from the N-terminus, the 1391-residue chain is ESX-5 secretion system protein EccC5 (1391 aa).

2 helical membrane passes run 38–58 (WLIV…AMVF) and 65–85 (FGGI…MMMF). 3 consecutive FtsK domains span residues 476–678 (GELL…GAAQ), 858–1052 (QPPW…EDAK), and 1161–1354 (LAPV…DPDE). ATP-binding positions include 499–506 (GTTGSGKS), 876–883 (GAGGSGKT), and 1178–1185 (GRRECGRT).

As to quaternary structure, part of the ESX-5 / type VII secretion system (T7SS), which is composed of cytosolic and membrane components. The ESX-5 membrane complex is composed of EccB5, EccC5, EccD5 and EccE5.

It is found in the cell inner membrane. In terms of biological role, part of the ESX-5 specialized secretion system, which is responsible for the secretion of EsxN and a number of PE_PGRS and PPE proteins, including PPE41. The polypeptide is ESX-5 secretion system protein EccC5 (Mycobacterium tuberculosis (strain CDC 1551 / Oshkosh)).